The chain runs to 200 residues: LHFPL tetraspan subfamily member 6 protein (200 aa).

The first 21 residues, Met-1–Ala-21, serve as a signal peptide directing secretion. 2 consecutive transmembrane segments (helical) span residues Ile-84–Ile-104 and Gly-123–Trp-143. N-linked (GlcNAc...) asparagine glycosylation is present at Asn-154. A helical transmembrane segment spans residues Cys-172 to Gly-192.

This sequence belongs to the LHFP family.

Its subcellular location is the membrane. This chain is LHFPL tetraspan subfamily member 6 protein, found in Danio rerio (Zebrafish).